The sequence spans 64 residues: Conotoxin Ca5.3 (64 aa).

Positions 1–22 are cleaved as a signal peptide; sequence MRCVPVFIILLLLIASAPGVDA. Positions 23-48 are excised as a propeptide; that stretch reads QPKTKYNAPLTSLHDNAKGILQEHWN. Isoleucine 61 bears the Isoleucine amide mark.

The protein belongs to the conotoxin T superfamily. In terms of processing, contains 2 disulfide bonds that can be either 'C1-C3, C2-C4' or 'C1-C4, C2-C3', since these disulfide connectivities have been observed for conotoxins with cysteine framework V (for examples, see AC P0DQQ7 and AC P81755). Expressed by the venom duct.

The protein localises to the secreted. This chain is Conotoxin Ca5.3, found in Conus caracteristicus (Characteristic cone).